The chain runs to 335 residues: Epidermal differentiation-specific protein (335 aa).

Beta/gamma crystallin 'Greek key' domains are found at residues 2–42 (NTIT…KIVG), 43–81 (QPWI…RLIT), 87–126 (PQIT…RVQR), and 127–169 (GAWA…YPLR).

The protein belongs to the beta/gamma-crystallin family. In terms of tissue distribution, epidermis specific.

The sequence is that of Epidermal differentiation-specific protein from Cynops pyrrhogaster (Japanese fire-bellied newt).